A 1008-amino-acid chain; its full sequence is Translation initiation factor IF-2 (1008 aa).

Disordered stretches follow at residues 113–136 (AVTA…KGNV), 153–235 (DKDS…PAAP), and 253–405 (GLTV…YRKD). Basic and acidic residues-rich tracts occupy residues 153 to 180 (DKDS…KAKP) and 189 to 213 (PKPE…KAET). Low complexity-rich tracts occupy residues 294-329 (GPNK…PRPQ) and 342-358 (GGPN…SNGP). Positions 365-381 (ASEKGEVTGKQIQDKIK) are enriched in basic and acidic residues. In terms of domain architecture, tr-type G spans 507–677 (DRAPIVTIMG…LLEAEMLELK (171 aa)). The tract at residues 516–523 (GHVDHGKT) is G1. 516–523 (GHVDHGKT) contacts GTP. The interval 541–545 (GITQH) is G2. The segment at 563–566 (DTPG) is G3. Residues 563 to 567 (DTPGH) and 617 to 620 (NKID) each bind GTP. A G4 region spans residues 617–620 (NKID). Positions 653 to 655 (SAK) are G5.

Belongs to the TRAFAC class translation factor GTPase superfamily. Classic translation factor GTPase family. IF-2 subfamily.

The protein localises to the cytoplasm. Its function is as follows. One of the essential components for the initiation of protein synthesis. Protects formylmethionyl-tRNA from spontaneous hydrolysis and promotes its binding to the 30S ribosomal subunits. Also involved in the hydrolysis of GTP during the formation of the 70S ribosomal complex. The polypeptide is Translation initiation factor IF-2 (Cytophaga hutchinsonii (strain ATCC 33406 / DSM 1761 / CIP 103989 / NBRC 15051 / NCIMB 9469 / D465)).